Here is a 255-residue protein sequence, read N- to C-terminus: Na(+)-translocating NADH-quinone reductase subunit C (255 aa).

The helical transmembrane segment at 12 to 32 (LFVVIALSLVCSIIVSTAAVG) threads the bilayer. An FMN phosphoryl threonine modification is found at Thr-223.

The protein belongs to the NqrC family. As to quaternary structure, composed of six subunits; NqrA, NqrB, NqrC, NqrD, NqrE and NqrF. Requires FMN as cofactor.

It localises to the cell inner membrane. It catalyses the reaction a ubiquinone + n Na(+)(in) + NADH + H(+) = a ubiquinol + n Na(+)(out) + NAD(+). In terms of biological role, NQR complex catalyzes the reduction of ubiquinone-1 to ubiquinol by two successive reactions, coupled with the transport of Na(+) ions from the cytoplasm to the periplasm. NqrA to NqrE are probably involved in the second step, the conversion of ubisemiquinone to ubiquinol. This is Na(+)-translocating NADH-quinone reductase subunit C from Vibrio anguillarum (Listonella anguillarum).